Here is a 165-residue protein sequence, read N- to C-terminus: Large ribosomal subunit protein uL15 (165 aa).

Residues 1-29 are compositionally biased toward basic residues; the sequence is MTSKKKRQRGSRTHGGGSHKNRRGAGHRG. Disordered stretches follow at residues 1–59 and 133–165; these read MTSK…QKVQ and KVEG…ADEE. Positions 30–47 are enriched in basic and acidic residues; that stretch reads GRGDAGRDKHEFHNHEPL. Over residues 154–165 the composition is skewed to acidic residues; it reads AEETEDADADEE.

It belongs to the universal ribosomal protein uL15 family. As to quaternary structure, part of the 50S ribosomal subunit. Interacts weakly with proteins L18e and L32e.

Functionally, binds to the 23S rRNA. This chain is Large ribosomal subunit protein uL15 (rpl15), found in Haloarcula marismortui (strain ATCC 43049 / DSM 3752 / JCM 8966 / VKM B-1809) (Halobacterium marismortui).